The following is a 266-amino-acid chain: Probable metal transport system membrane protein TP_0036 (266 aa).

8 helical membrane-spanning segments follow: residues Ala10–Leu30, Ala34–Cys54, Ile56–Leu76, Leu88–Ile108, Ile120–Gly140, Val172–Val192, Phe211–Val231, and Val238–Leu258.

The protein belongs to the ABC-3 integral membrane protein family.

Its subcellular location is the cell inner membrane. Part of an ATP-driven transport system TP_0034/TP_0035/TP_0036 for a metal. This Treponema pallidum (strain Nichols) protein is Probable metal transport system membrane protein TP_0036.